A 79-amino-acid polypeptide reads, in one-letter code: Protein SNA2 (79 aa).

Residues M1–W6 lie on the Cytoplasmic side of the membrane. Residues F7–F27 form a helical membrane-spanning segment. The Vesicular segment spans residues T28–L32. The helical transmembrane segment at I33–I53 threads the bilayer. Topologically, residues S54–A79 are cytoplasmic. 2 positions are modified to phosphoserine: S71 and S77.

The protein belongs to the UPF0057 (PMP3) family.

It is found in the membrane. It localises to the lipid droplet. The chain is Protein SNA2 (SNA2) from Saccharomyces cerevisiae (strain ATCC 204508 / S288c) (Baker's yeast).